We begin with the raw amino-acid sequence, 286 residues long: Putative short-chain type dehydrogenase/reductase Rv0148 (286 aa).

Val-11–Val-35 is an NAD(+) binding site. Residue Ser-151 participates in substrate binding. Tyr-164 serves as the catalytic Proton acceptor. Residue Lys-280 forms an Isoglutamyl lysine isopeptide (Lys-Gln) (interchain with Q-Cter in protein Pup) linkage.

It belongs to the short-chain dehydrogenases/reductases (SDR) family. Pupylated at Lys-280 by the prokaryotic ubiquitin-like protein Pup, which probably leads to its degradation by the proteasome.

The sequence is that of Putative short-chain type dehydrogenase/reductase Rv0148 from Mycobacterium tuberculosis (strain ATCC 25618 / H37Rv).